Here is a 257-residue protein sequence, read N- to C-terminus: UPF0246 protein Rsph17025_0016 (257 aa).

It belongs to the UPF0246 family.

This chain is UPF0246 protein Rsph17025_0016, found in Cereibacter sphaeroides (strain ATCC 17025 / ATH 2.4.3) (Rhodobacter sphaeroides).